Reading from the N-terminus, the 357-residue chain is Eugenol O-methyltransferase (357 aa).

S-adenosyl-L-methionine is bound by residues glycine 203, aspartate 226, aspartate 246, methionine 247, and lysine 260. Catalysis depends on histidine 264, which acts as the Proton acceptor.

It belongs to the class I-like SAM-binding methyltransferase superfamily. Cation-independent O-methyltransferase family. COMT subfamily. Specifically expressed in the peltate glandular trichomes on the surface of the young basil leaves.

The enzyme catalyses (E)-isoeugenol + S-adenosyl-L-methionine = (E)-isomethyleugenol + S-adenosyl-L-homocysteine + H(+). It functions in the pathway aromatic compound metabolism; phenylpropanoid biosynthesis. Its function is as follows. Phenylpropene O-methyltransferase that catalyzes the methylation of the para-4-hydroxyl of eugenol to methyleugenol. Can also convert chavicol to methylchavicol but with less affinity. The chain is Eugenol O-methyltransferase (EOMT1) from Ocimum basilicum (Sweet basil).